Here is a 228-residue protein sequence, read N- to C-terminus: Enolase-phosphatase E1 (228 aa).

This sequence belongs to the HAD-like hydrolase superfamily. MasA/MtnC family. Monomer. Requires Mg(2+) as cofactor.

It carries out the reaction 5-methylsulfanyl-2,3-dioxopentyl phosphate + H2O = 1,2-dihydroxy-5-(methylsulfanyl)pent-1-en-3-one + phosphate. Its pathway is amino-acid biosynthesis; L-methionine biosynthesis via salvage pathway; L-methionine from S-methyl-5-thio-alpha-D-ribose 1-phosphate: step 3/6. It participates in amino-acid biosynthesis; L-methionine biosynthesis via salvage pathway; L-methionine from S-methyl-5-thio-alpha-D-ribose 1-phosphate: step 4/6. Bifunctional enzyme that catalyzes the enolization of 2,3-diketo-5-methylthiopentyl-1-phosphate (DK-MTP-1-P) into the intermediate 2-hydroxy-3-keto-5-methylthiopentenyl-1-phosphate (HK-MTPenyl-1-P), which is then dephosphorylated to form the acireductone 1,2-dihydroxy-3-keto-5-methylthiopentene (DHK-MTPene). The protein is Enolase-phosphatase E1 of Picosynechococcus sp. (strain ATCC 27264 / PCC 7002 / PR-6) (Agmenellum quadruplicatum).